We begin with the raw amino-acid sequence, 208 residues long: 2-phospho-L-lactate guanylyltransferase (208 aa).

Belongs to the CofC family. As to quaternary structure, homodimer.

The enzyme catalyses (2S)-2-phospholactate + GTP + H(+) = (2S)-lactyl-2-diphospho-5'-guanosine + diphosphate. The protein operates within cofactor biosynthesis; coenzyme F420 biosynthesis. Guanylyltransferase that catalyzes the activation of (2S)-2-phospholactate (2-PL) as (2S)-lactyl-2-diphospho-5'-guanosine, via the condensation of 2-PL with GTP. It is involved in the biosynthesis of coenzyme F420, a hydride carrier cofactor. The chain is 2-phospho-L-lactate guanylyltransferase from Haloarcula marismortui (strain ATCC 43049 / DSM 3752 / JCM 8966 / VKM B-1809) (Halobacterium marismortui).